A 425-amino-acid polypeptide reads, in one-letter code: UDP-N-acetylglucosamine 1-carboxyvinyltransferase (425 aa).

22–23 (KN) is a phosphoenolpyruvate binding site. Arg93 contacts UDP-N-acetyl-alpha-D-glucosamine. Catalysis depends on Asp117, which acts as the Proton donor. The UDP-N-acetyl-alpha-D-glucosamine site is built by Asp312 and Met334.

It belongs to the EPSP synthase family. MurA subfamily.

It localises to the cytoplasm. It catalyses the reaction phosphoenolpyruvate + UDP-N-acetyl-alpha-D-glucosamine = UDP-N-acetyl-3-O-(1-carboxyvinyl)-alpha-D-glucosamine + phosphate. Its pathway is cell wall biogenesis; peptidoglycan biosynthesis. Its function is as follows. Cell wall formation. Adds enolpyruvyl to UDP-N-acetylglucosamine. The protein is UDP-N-acetylglucosamine 1-carboxyvinyltransferase of Treponema pallidum (strain Nichols).